Consider the following 304-residue polypeptide: Ribonuclease Z (304 aa).

Residues His-63, His-65, Asp-67, His-68, His-143, Asp-213, and His-271 each coordinate Zn(2+). Asp-67 functions as the Proton acceptor in the catalytic mechanism.

The protein belongs to the RNase Z family. Homodimer. Zn(2+) is required as a cofactor.

The catalysed reaction is Endonucleolytic cleavage of RNA, removing extra 3' nucleotides from tRNA precursor, generating 3' termini of tRNAs. A 3'-hydroxy group is left at the tRNA terminus and a 5'-phosphoryl group is left at the trailer molecule.. Zinc phosphodiesterase, which displays some tRNA 3'-processing endonuclease activity. Probably involved in tRNA maturation, by removing a 3'-trailer from precursor tRNA. This is Ribonuclease Z from Bacteroides fragilis (strain YCH46).